We begin with the raw amino-acid sequence, 316 residues long: 4-hydroxy-3-methylbut-2-enyl diphosphate reductase (316 aa).

Cysteine 12 serves as a coordination point for [4Fe-4S] cluster. Positions 41 and 74 each coordinate (2E)-4-hydroxy-3-methylbut-2-enyl diphosphate. Positions 41 and 74 each coordinate dimethylallyl diphosphate. The isopentenyl diphosphate site is built by histidine 41 and histidine 74. Position 96 (cysteine 96) interacts with [4Fe-4S] cluster. Position 124 (histidine 124) interacts with (2E)-4-hydroxy-3-methylbut-2-enyl diphosphate. Histidine 124 is a binding site for dimethylallyl diphosphate. Isopentenyl diphosphate is bound at residue histidine 124. Glutamate 126 functions as the Proton donor in the catalytic mechanism. Threonine 167 contributes to the (2E)-4-hydroxy-3-methylbut-2-enyl diphosphate binding site. Cysteine 197 provides a ligand contact to [4Fe-4S] cluster. Residues serine 225, serine 226, asparagine 227, and serine 269 each coordinate (2E)-4-hydroxy-3-methylbut-2-enyl diphosphate. The dimethylallyl diphosphate site is built by serine 225, serine 226, asparagine 227, and serine 269. 4 residues coordinate isopentenyl diphosphate: serine 225, serine 226, asparagine 227, and serine 269.

This sequence belongs to the IspH family. As to quaternary structure, homodimer. [4Fe-4S] cluster serves as cofactor.

The enzyme catalyses isopentenyl diphosphate + 2 oxidized [2Fe-2S]-[ferredoxin] + H2O = (2E)-4-hydroxy-3-methylbut-2-enyl diphosphate + 2 reduced [2Fe-2S]-[ferredoxin] + 2 H(+). It carries out the reaction dimethylallyl diphosphate + 2 oxidized [2Fe-2S]-[ferredoxin] + H2O = (2E)-4-hydroxy-3-methylbut-2-enyl diphosphate + 2 reduced [2Fe-2S]-[ferredoxin] + 2 H(+). Its pathway is isoprenoid biosynthesis; dimethylallyl diphosphate biosynthesis; dimethylallyl diphosphate from (2E)-4-hydroxy-3-methylbutenyl diphosphate: step 1/1. The protein operates within isoprenoid biosynthesis; isopentenyl diphosphate biosynthesis via DXP pathway; isopentenyl diphosphate from 1-deoxy-D-xylulose 5-phosphate: step 6/6. Catalyzes the conversion of 1-hydroxy-2-methyl-2-(E)-butenyl 4-diphosphate (HMBPP) into a mixture of isopentenyl diphosphate (IPP) and dimethylallyl diphosphate (DMAPP). Acts in the terminal step of the DOXP/MEP pathway for isoprenoid precursor biosynthesis. The sequence is that of 4-hydroxy-3-methylbut-2-enyl diphosphate reductase from Pectobacterium carotovorum subsp. carotovorum (strain PC1).